The following is a 424-amino-acid chain: Ankyrin repeat domain-containing protein 61 (424 aa).

ANK repeat units lie at residues 80-109, 113-169, 172-201, 205-234, 239-278, 282-311, and 315-348; these read LSFL…DPEA, QGFT…ARVD, HRHC…QVNA, SSMT…SVNC, TGNT…QVNA, DGQA…NVNI, and NGES…PLRL.

This Bos taurus (Bovine) protein is Ankyrin repeat domain-containing protein 61 (ANKRD61).